Reading from the N-terminus, the 325-residue chain is Tetraacyldisaccharide 4'-kinase (325 aa).

58–65 (TVGGSGKT) contacts ATP.

Belongs to the LpxK family.

It carries out the reaction a lipid A disaccharide + ATP = a lipid IVA + ADP + H(+). It participates in glycolipid biosynthesis; lipid IV(A) biosynthesis; lipid IV(A) from (3R)-3-hydroxytetradecanoyl-[acyl-carrier-protein] and UDP-N-acetyl-alpha-D-glucosamine: step 6/6. Functionally, transfers the gamma-phosphate of ATP to the 4'-position of a tetraacyldisaccharide 1-phosphate intermediate (termed DS-1-P) to form tetraacyldisaccharide 1,4'-bis-phosphate (lipid IVA). The protein is Tetraacyldisaccharide 4'-kinase of Coxiella burnetii (strain Dugway 5J108-111).